Here is a 124-residue protein sequence, read N- to C-terminus: Probable 5-hydroxyisourate hydrolase (124 aa).

3 residues coordinate substrate: H16, R57, and Y121.

The protein belongs to the transthyretin family. 5-hydroxyisourate hydrolase subfamily. As to quaternary structure, homotetramer.

The catalysed reaction is 5-hydroxyisourate + H2O = 5-hydroxy-2-oxo-4-ureido-2,5-dihydro-1H-imidazole-5-carboxylate + H(+). Functionally, catalyzes the hydrolysis of 5-hydroxyisourate (HIU) to 2-oxo-4-hydroxy-4-carboxy-5-ureidoimidazoline (OHCU). This Schizosaccharomyces pombe (strain 972 / ATCC 24843) (Fission yeast) protein is Probable 5-hydroxyisourate hydrolase.